We begin with the raw amino-acid sequence, 96 residues long: MSQIKLTPEELRISAQKYTTGSQSITDVLTVLTQEQAVIDENWDGTAFDSFEAQFNELSPKITQFAQLLEDINQQLLKVADVVEQTDSDIASQINK.

Belongs to the WXG100 family. sagEsxA-like subfamily. Homodimer.

In Streptococcus agalactiae serotype V (strain ATCC BAA-611 / 2603 V/R), this protein is ESAT-6-like protein SAG0230.